The chain runs to 96 residues: RNA-binding protein Hfq (96 aa).

Residues 9 to 68 (DPYLNALRRERIPVSIYLVNGIKLQGQIESFDQFVILLKNTVNQMVYKHAISTVVPARSV) enclose the Sm domain. The disordered stretch occupies residues 67-96 (SVSHHNNSNNSNQQNYQQEQQTDSNVEKAE). The span at 72–87 (NNSNNSNQQNYQQEQQ) shows a compositional bias: low complexity.

It belongs to the Hfq family. Homohexamer.

Functionally, RNA chaperone that binds small regulatory RNA (sRNAs) and mRNAs to facilitate mRNA translational regulation in response to envelope stress, environmental stress and changes in metabolite concentrations. Also binds with high specificity to tRNAs. This Pasteurella multocida (strain Pm70) protein is RNA-binding protein Hfq.